Here is a 569-residue protein sequence, read N- to C-terminus: MPYRISRQAYAETYGPTTGDRVRLADTDLILEVEKDYTVYGDEVKFGGGKVIRDGMGQSQTPRTEGAVDTVITNALILDWWGIVKADVGLKDGRIVGIGKAGNPDTQQGVTIVVGPGTEAIAGEGHILTAGGIDTHIHFICPQQIETALASGVTTLMGGGTGPATGTNATTCTPGAFHIGRMLQAAEGLPVNLGFFGKGNASTPEALEEQVRAGACGLKLHEDWGTTPATIDACLSVADRMDVQVCIHTDTLNEAGFVEDTIAAIKGRTIHTFHTEGAGGGHAPDIIKICGEANVLPSSTNPTRPYTRNTLEEHLDMLMVCHHLDPKIPEDVAFAESRIRRETIAAEDILHDLGAFSIIASDSQAMGRVGEVITRTFQTAHKMKVQRGALPEDSARNDNHRLTRYIAKVTINPALAHGISSEVGSIETGKLADLVLWKPGFFGIRPELVVKGGSIVWAQMGDANASIPTPGPVHGRPMFGAFGKALAPSCLTFVSEAAMDNDIQSKLRLDRTCMAVKETRSVGKSALKLNAALPKVSVDPQTYEVFADGELLTCEPAEVLPLAQRYLLL.

The 439-residue stretch at 131–569 (GGIDTHIHFI…LPLAQRYLLL (439 aa)) folds into the Urease domain. 3 residues coordinate Ni(2+): H136, H138, and K219. K219 is modified (N6-carboxylysine). Residue H221 coordinates substrate. Residues H248 and H274 each coordinate Ni(2+). The Proton donor role is filled by H322. D362 serves as a coordination point for Ni(2+).

This sequence belongs to the metallo-dependent hydrolases superfamily. Urease alpha subunit family. Heterotrimer of UreA (gamma), UreB (beta) and UreC (alpha) subunits. Three heterotrimers associate to form the active enzyme. Ni cation serves as cofactor. Carboxylation allows a single lysine to coordinate two nickel ions.

The protein localises to the cytoplasm. It catalyses the reaction urea + 2 H2O + H(+) = hydrogencarbonate + 2 NH4(+). The protein operates within nitrogen metabolism; urea degradation; CO(2) and NH(3) from urea (urease route): step 1/1. This is Urease subunit alpha from Parasynechococcus marenigrum (strain WH8102).